The sequence spans 411 residues: Tetra-peptide repeat homeobox protein 1 (411 aa).

Residues 3–24 (SLREQQLQVWFKNRRAKLARER) constitute a DNA-binding region (homeobox). Disordered stretches follow at residues 20 to 63 (LARE…SGIL), 88 to 246 (IPAA…ISGP), 286 to 340 (PILS…SPDA), and 363 to 411 (LEGS…LLDL). Residues 27 to 55 (QQQPQRVPGQRGRGARAAPLVPAASASAP) show a composition bias toward low complexity. Composition is skewed to pro residues over residues 95 to 139 (GPGP…PGPI) and 149 to 246 (FRGP…ISGP). Residues 295 to 307 (SPGSLPGLAPILG) show a composition bias toward low complexity. Positions 319 to 335 (APIPGPGSLPAPAPLWP) are enriched in pro residues. Polar residues-rich tracts occupy residues 366–376 (SSVSTMTSQYQ) and 388–402 (GSQPQEEGGSVNENH).

The protein belongs to the paired homeobox family.

Its subcellular location is the nucleus. In terms of biological role, transcription factor expressed after fertilization required for zygotic genome activation (ZGA), a critical event in early embryonic development during which the developmental control passes from maternally provided mRNAs to the expression of the zygotic genome after fertilization. Binds and activates expression of key ZGA marker genes, such as NANOGNB, ZSCAN4, DUXB, KLF5 and DPPA3. Binds to regulatory DNA sequences containing a 5'-TAATCC-3' sequence motif. This Homo sapiens (Human) protein is Tetra-peptide repeat homeobox protein 1.